The following is a 372-amino-acid chain: Probable E3 ubiquitin-protein ligase makorin-1 (372 aa).

2 C3H1-type zinc fingers span residues 20–45 and 48–75; these read KHVTCRYFMHGLCKEGDNCRYSHDLT and KPAAMICKFFQKGNCVFGERCRFDHCKP. A disordered region spans residues 78–110; the sequence is NEEFSSPQMLPPSSPSPSTDPESSQPAPRPKTQ. The span at 93–103 shows a compositional bias: low complexity; sequence SPSTDPESSQP. The segment at 153-180 adopts a C3H1-type 3 zinc-finger fold; it reads ALRKQLCPYAAVGECRYGINCAYLHGDV. The segment at 181 to 208 is makorin-type Cys-His; that stretch reads CDMCGLQVLHPTDNSQRSQHTKACIEAH. Residues 226-280 form an RING-type zinc finger; the sequence is CGVCMEVVFEKANPSERRFGILSNCNHCYCLKCIRKWRSAKQFESKIIKSCPECR. Residues 309-338 form a C3H1-type 4 zinc finger; the sequence is GMGRKPCRYFDEGRGICPFGANCFYKHAFP.

It carries out the reaction S-ubiquitinyl-[E2 ubiquitin-conjugating enzyme]-L-cysteine + [acceptor protein]-L-lysine = [E2 ubiquitin-conjugating enzyme]-L-cysteine + N(6)-ubiquitinyl-[acceptor protein]-L-lysine.. It functions in the pathway protein modification; protein ubiquitination. Functionally, E3 ubiquitin ligase catalyzing the covalent attachment of ubiquitin moieties onto substrate proteins. The sequence is that of Probable E3 ubiquitin-protein ligase makorin-1 from Tetraodon nigroviridis (Spotted green pufferfish).